We begin with the raw amino-acid sequence, 318 residues long: MFMLNLLTMIVPVLLAVAFLTLVERKILGYMQLRKGPNVVGPHGLLQPIADAVKLFTKEPLRPLTSSITMFIMAPILALTLALTMWIPLPMPHPLLNMNLGVLFMLAMSSLAVYALLWSGWASNSKYALIGALRAVAQTISYEVTLAIILLSTLLMSGSYSLSTLIITQEYIWLILPSWPLTMMWFISTLAETNRAPFDLTEGESELVSGFNVEYAGGPFALFFLAEYANIIMMNALTTTLFLGAWNNPTTPELYTTNFAMKTLLLTMSFLWIRASYPRFRYDQLMHLLWKNFLPLTLALCMWYVTMPIMMAGIPPQT.

Transmembrane regions (helical) follow at residues 2 to 22 (FMLNLLTMIVPVLLAVAFLTL), 68 to 88 (ITMFIMAPILALTLALTMWIP), 100 to 120 (LGVLFMLAMSSLAVYALLWSG), 147 to 167 (AIILLSTLLMSGSYSLSTLII), 171 to 191 (YIWLILPSWPLTMMWFISTLA), 217 to 237 (GGPFALFFLAEYANIIMMNAL), 254 to 273 (LYTTNFAMKTLLLTMSFLWI), and 294 to 314 (LPLTLALCMWYVTMPIMMAGI).

The protein belongs to the complex I subunit 1 family.

It localises to the mitochondrion inner membrane. The enzyme catalyses a ubiquinone + NADH + 5 H(+)(in) = a ubiquinol + NAD(+) + 4 H(+)(out). In terms of biological role, core subunit of the mitochondrial membrane respiratory chain NADH dehydrogenase (Complex I) that is believed to belong to the minimal assembly required for catalysis. Complex I functions in the transfer of electrons from NADH to the respiratory chain. The immediate electron acceptor for the enzyme is believed to be ubiquinone. The sequence is that of NADH-ubiquinone oxidoreductase chain 1 (MT-ND1) from Hsunycteris thomasi (Thomas's nectar bat).